The sequence spans 148 residues: Ponticulin-like protein D (148 aa).

The N-terminal stretch at 1–20 (MLLNKSLLLLVAFVFAIVSA) is a signal peptide. Asparagine 67 is a glycosylation site (N-linked (GlcNAc...) asparagine). A lipid anchor (GPI-like-anchor amidated aspartate) is attached at aspartate 125. Residues 126 to 148 (SSAAATMIASFSAILIALLFALL) constitute a propeptide, removed in mature form.

It belongs to the ponticulin family. In terms of processing, the GPI-like-anchor contains a phosphoceramide group, rather than a phosphatidyl group.

The protein resides in the cell membrane. This Dictyostelium discoideum (Social amoeba) protein is Ponticulin-like protein D (ponD).